A 133-amino-acid chain; its full sequence is Large-conductance mechanosensitive channel (133 aa).

Transmembrane regions (helical) follow at residues 8-28 (FAMK…GAFG), 30-50 (IVTS…LGGI), and 73-93 (GQFI…FLFI).

The protein belongs to the MscL family. As to quaternary structure, homopentamer.

The protein resides in the cell membrane. In terms of biological role, channel that opens in response to stretch forces in the membrane lipid bilayer. May participate in the regulation of osmotic pressure changes within the cell. The protein is Large-conductance mechanosensitive channel of Hathewaya histolytica (Clostridium histolyticum).